A 191-amino-acid chain; its full sequence is Protein DMP10 (191 aa).

Transmembrane regions (helical) follow at residues 15 to 35, 48 to 68, 114 to 134, and 158 to 178; these read FANL…PSFS, LLTI…SFTD, LSFV…ALAV, and LMIK…FAIF.

Belongs to the plant DMP1 protein family. As to expression, restricted to flowers.

It is found in the membrane. Its function is as follows. Involved in membrane remodeling. The sequence is that of Protein DMP10 from Arabidopsis thaliana (Mouse-ear cress).